Here is a 337-residue protein sequence, read N- to C-terminus: Succinylglutamate desuccinylase (337 aa).

Zn(2+) contacts are provided by H59, E62, and H152. The active site involves E216.

Belongs to the AspA/AstE family. Succinylglutamate desuccinylase subfamily. Zn(2+) serves as cofactor.

It carries out the reaction N-succinyl-L-glutamate + H2O = L-glutamate + succinate. It functions in the pathway amino-acid degradation; L-arginine degradation via AST pathway; L-glutamate and succinate from L-arginine: step 5/5. Its function is as follows. Transforms N(2)-succinylglutamate into succinate and glutamate. This chain is Succinylglutamate desuccinylase, found in Ectopseudomonas mendocina (strain ymp) (Pseudomonas mendocina).